Reading from the N-terminus, the 400-residue chain is Subtilisin-like protease 7 (400 aa).

The signal sequence occupies residues 1–20 (MGFITKAIPLALAAASVING). The propeptide occupies 21-119 (AEILETRAGV…IERDARVQIN (99 aa)). The region spanning 36–118 (KYIVVMNDGI…YIERDARVQI (83 aa)) is the Inhibitor I9 domain. A Peptidase S8 domain is found at 129-400 (SWGLARVGSK…SKLINNGSGM (272 aa)). Active-site charge relay system residues include aspartate 161 and histidine 192. Residues asparagine 222 and asparagine 252 are each glycosylated (N-linked (GlcNAc...) asparagine). Serine 346 functions as the Charge relay system in the catalytic mechanism. Asparagine 396 carries N-linked (GlcNAc...) asparagine glycosylation.

This sequence belongs to the peptidase S8 family.

The protein resides in the secreted. In terms of biological role, secreted subtilisin-like serine protease with keratinolytic activity that contributes to pathogenicity. This chain is Subtilisin-like protease 7 (SUB7), found in Trichophyton soudanense.